The sequence spans 1223 residues: DNA-directed RNA polymerase II subunit RPB2 (1223 aa).

Positions 1–20 (MSADNEDYYDEDPYGFEEEN) are disordered. Asp836 is a Mg(2+) binding site. Cys1162, Cys1165, Cys1181, and Cys1184 together coordinate Zn(2+). The segment at 1162–1184 (CGICGLMSVIAKLNHNQFECKGC) adopts a C4-type zinc-finger fold.

It belongs to the RNA polymerase beta chain family. As to quaternary structure, component of the RNA polymerase II (Pol II) complex consisting of 12 subunits.

Its subcellular location is the nucleus. The enzyme catalyses RNA(n) + a ribonucleoside 5'-triphosphate = RNA(n+1) + diphosphate. In terms of biological role, DNA-dependent RNA polymerase catalyzes the transcription of DNA into RNA using the four ribonucleoside triphosphates as substrates. Second largest component of RNA polymerase II which synthesizes mRNA precursors and many functional non-coding RNAs. Proposed to contribute to the polymerase catalytic activity and forms the polymerase active center together with the largest subunit. Pol II is the central component of the basal RNA polymerase II transcription machinery. It is composed of mobile elements that move relative to each other. RPB2 is part of the core element with the central large cleft, the clamp element that moves to open and close the cleft and the jaws that are thought to grab the incoming DNA template. The protein is DNA-directed RNA polymerase II subunit RPB2 (RPB2) of Candida glabrata (strain ATCC 2001 / BCRC 20586 / JCM 3761 / NBRC 0622 / NRRL Y-65 / CBS 138) (Yeast).